A 305-amino-acid polypeptide reads, in one-letter code: tRNA dimethylallyltransferase (305 aa).

Gly11–Thr18 is an ATP binding site. Thr13 to Thr18 contributes to the substrate binding site. The interaction with substrate tRNA stretch occupies residues Asp36–Gln39.

The protein belongs to the IPP transferase family. In terms of assembly, monomer. Mg(2+) serves as cofactor.

It carries out the reaction adenosine(37) in tRNA + dimethylallyl diphosphate = N(6)-dimethylallyladenosine(37) in tRNA + diphosphate. Catalyzes the transfer of a dimethylallyl group onto the adenine at position 37 in tRNAs that read codons beginning with uridine, leading to the formation of N6-(dimethylallyl)adenosine (i(6)A). The polypeptide is tRNA dimethylallyltransferase (Listeria monocytogenes serotype 4a (strain HCC23)).